A 116-amino-acid chain; its full sequence is Transmembrane protein 213 (116 aa).

The signal sequence occupies residues 1-35 (MAQSGVFLRNPGHLTSAPQAALLFSLVLTSFHLSC). The Extracellular segment spans residues 36-79 (GTETSSSNSTLSAHHPDPGTLEQCANVDFCPLASLCCRASVDEY). Residues 80–100 (GWIAAAVGWSFWFLTLILLCV) traverse the membrane as a helical segment. The Cytoplasmic portion of the chain corresponds to 101-116 (DKLMKLTPEEPKDLAA).

The protein resides in the membrane. This Mus musculus (Mouse) protein is Transmembrane protein 213 (Tmem213).